Consider the following 122-residue polypeptide: Large ribosomal subunit protein uL14 (122 aa).

The protein belongs to the universal ribosomal protein uL14 family. In terms of assembly, part of the 50S ribosomal subunit. Forms a cluster with proteins L3 and L19. In the 70S ribosome, L14 and L19 interact and together make contacts with the 16S rRNA in bridges B5 and B8.

In terms of biological role, binds to 23S rRNA. Forms part of two intersubunit bridges in the 70S ribosome. The protein is Large ribosomal subunit protein uL14 of Prosthecochloris aestuarii (strain DSM 271 / SK 413).